The sequence spans 98 residues: NADH-ubiquinone oxidoreductase chain 4L (98 aa).

The next 3 membrane-spanning stretches (helical) occupy residues Met-1–Met-21, Ser-29–Leu-49, and Ile-61–Val-81.

This sequence belongs to the complex I subunit 4L family. In terms of assembly, core subunit of respiratory chain NADH dehydrogenase (Complex I) which is composed of 45 different subunits.

It is found in the mitochondrion inner membrane. It catalyses the reaction a ubiquinone + NADH + 5 H(+)(in) = a ubiquinol + NAD(+) + 4 H(+)(out). Functionally, core subunit of the mitochondrial membrane respiratory chain NADH dehydrogenase (Complex I) which catalyzes electron transfer from NADH through the respiratory chain, using ubiquinone as an electron acceptor. Part of the enzyme membrane arm which is embedded in the lipid bilayer and involved in proton translocation. The chain is NADH-ubiquinone oxidoreductase chain 4L (MT-ND4L) from Uroderma bilobatum (Tent-making bat).